The following is a 450-amino-acid chain: Allergen Fus c 3 (450 aa).

4 disordered regions span residues 18-87 (EPEM…SRAQ), 99-148 (DLHA…HLPP), 185-377 (SGHP…NLVE), and 398-426 (QIRH…RRVS). The segment covering 31–46 (PHQQPISSPNRTSRNT) has biased composition (polar residues). The segment covering 101–112 (HAPSHPSHLSHG) has biased composition (low complexity). A compositionally biased stretch (basic and acidic residues) spans 113 to 125 (APHEQEHAHEIQR). The span at 272 to 286 (RPRKPARARRQKKEP) shows a compositional bias: basic residues. Polar residues predominate over residues 291–304 (DASQGARSSSTGGT). The span at 305 to 341 (AHSVSDAASPSSTSHQSRASLTSKSASMTSAASTASS) shows a compositional bias: low complexity. Residues 356–377 (TLDKPNDTAEDRRTRASHNLVE) are compositionally biased toward basic and acidic residues. The region spanning 368-441 (RTRASHNLVE…EMARRHIEAL (74 aa)) is the bHLH domain.

The protein is Allergen Fus c 3 of Fusarium culmorum.